Reading from the N-terminus, the 518-residue chain is Protein PAC2 (518 aa).

Residues 23 to 67 (VIKPWPSVKAYGVEWDDHSRGKHSGTIDDIHYFDVQIPNSGSFLK) form the CAP-Gly domain. LRR repeat units follow at residues 153 to 174 (NVKD…CEFI), 179 to 201 (NLES…KEYD), 204 to 227 (HIKT…LKSF), 229 to 252 (TLKM…ENEI), 255 to 276 (TLEE…PKNL), 277 to 298 (TLKG…AIYS), 299 to 319 (VESL…DDLN), and 324 to 345 (SLKN…INVE).

It is found in the cytoplasm. The protein localises to the cytoskeleton. Required for viability in the absence of the kinesin-related CIN8 mitotic motor. Seems to be involved in the assembly of alpha-tubulin. The protein is Protein PAC2 (PAC2) of Saccharomyces cerevisiae (strain ATCC 204508 / S288c) (Baker's yeast).